The chain runs to 88 residues: Small ribosomal subunit protein bS20 (88 aa).

The interval 1–27 (MANTKQAQKRARQAEQRRQHNASQRSM) is disordered.

This sequence belongs to the bacterial ribosomal protein bS20 family.

Its function is as follows. Binds directly to 16S ribosomal RNA. The protein is Small ribosomal subunit protein bS20 of Chromohalobacter salexigens (strain ATCC BAA-138 / DSM 3043 / CIP 106854 / NCIMB 13768 / 1H11).